The chain runs to 973 residues: UvrABC system protein A (973 aa).

Residue 34 to 41 coordinates ATP; that stretch reads GLSGSGKS. 2 consecutive ABC transporter domains span residues 330 to 609 and 629 to 958; these read WAKS…PNSI and AKKN…QFLK. 662–669 provides a ligand contact to ATP; that stretch reads GVSGGGKS. The segment at 761 to 787 adopts a C4-type zinc-finger fold; that stretch reads CEACQGDGVIKIEMHFLPDVYVTCDVC.

This sequence belongs to the ABC transporter superfamily. UvrA family. Forms a heterotetramer with UvrB during the search for lesions.

The protein localises to the cytoplasm. Its function is as follows. The UvrABC repair system catalyzes the recognition and processing of DNA lesions. UvrA is an ATPase and a DNA-binding protein. A damage recognition complex composed of 2 UvrA and 2 UvrB subunits scans DNA for abnormalities. When the presence of a lesion has been verified by UvrB, the UvrA molecules dissociate. This is UvrABC system protein A from Mesorhizobium japonicum (strain LMG 29417 / CECT 9101 / MAFF 303099) (Mesorhizobium loti (strain MAFF 303099)).